Consider the following 539-residue polypeptide: Beta-agarase A (539 aa).

The signal sequence occupies residues 1 to 19 (MKKNYLLLYFIFLLCGSIA). The 269-residue stretch at 21–289 (QDWNGIPVPA…WIRVYKPVAV (269 aa)) folds into the GH16 domain. Substrate contacts are provided by residues W73, 82–92 (NAPQAWTNGSQ), 96–98 (QAQ), and E144. The Nucleophile role is filled by E147. The active-site Proton donor is the E152. Substrate contacts are provided by R176 and D271. The segment at 332–353 (WANTNDIGSRDRGASNGRNNIN) is disordered.

The protein belongs to the glycosyl hydrolase 16 family. Monomer. Post-translationally, proteolytically cleaved into mature beta-agarase A catalytic chain (AgaAc).

Its subcellular location is the secreted. The enzyme catalyses Hydrolysis of (1-&gt;4)-beta-D-galactosidic linkages in agarose, giving the tetramer as the predominant product.. Its function is as follows. Cleaves the beta-1,4-linkages between beta-D-galactose and alpha-L-3,6-anhydro-galactose residues in agarose. Cleaves agarose in a random manner with retention of the anomeric-bond configuration, producing beta-anomers that give rise progressively to alpha-anomers when mutarotation takes place. The protein is Beta-agarase A (agaA) of Zobellia galactanivorans (strain DSM 12802 / CCUG 47099 / CIP 106680 / NCIMB 13871 / Dsij).